The following is a 207-amino-acid chain: MPLPDFRFIRLLPLAALVLTACSITTPKGPGKSPDSPQWRQHQQDVRNLNQYQTRGAFAYISDQQKVYARFFWQQTGQDRYRLLLTNPLGSTELELNAQPGNVQLVDNKGQRYTSDDAEEMIGKLTGMPIPLNSLRQWILGLPGDATDYKLDDQYRLSEITYSQNGKNWKVVYGGYDTKTQPAMPANMELTDGGQRIKLKMDNWIVK.

The signal sequence occupies residues 1-21 (MPLPDFRFIRLLPLAALVLTA). Residue Cys22 is the site of N-palmitoyl cysteine attachment. Cys22 carries S-diacylglycerol cysteine lipidation.

This sequence belongs to the LolB family. In terms of assembly, monomer.

It is found in the cell outer membrane. Plays a critical role in the incorporation of lipoproteins in the outer membrane after they are released by the LolA protein. The sequence is that of Outer-membrane lipoprotein LolB from Escherichia coli O6:H1 (strain CFT073 / ATCC 700928 / UPEC).